The primary structure comprises 75 residues: uncharacterized protein (75 aa).

This is an uncharacterized protein from Bacillus subtilis (strain 168).